Reading from the N-terminus, the 465-residue chain is Calcitonin gene-related peptide type 1 receptor (465 aa).

The first 17 residues, 1–17, serve as a signal peptide directing secretion; the sequence is MVICLLLCTPTDIFVVA. Topologically, residues 18–141 are extracellular; it reads SPEVNETQEY…HTNEGRMTAM (124 aa). N-linked (GlcNAc...) asparagine glycosylation is found at N22, N68, N120, and N125. 3 disulfides stabilise this stretch: C50–C76, C67–C107, and C90–C129. Residues 142-166 form a helical membrane-spanning segment; it reads NLFYLALIGHGLSLTSLLISLGIFF. Residues 167–177 are Cytoplasmic-facing; it reads YFKSLSCQRIT. A helical membrane pass occupies residues 178-200; it reads LHKNLFFSFVLNSVITIIWLTAV. At 201 to 211 the chain is on the extracellular side; that stretch reads ANNQELVQRNP. A helical membrane pass occupies residues 212–240; the sequence is TSCKVSQFIHLYLFGCNYFWMLCEGIYLH. The Cytoplasmic segment spans residues 241–254; the sequence is TLIVVAVFAEKQHL. Residues 255-275 traverse the membrane as a helical segment; it reads MWYYLLGWGFPLIPASIHAIA. The Extracellular portion of the chain corresponds to 276-291; that stretch reads RSYYYNDNCWISSNTS. A glycan (N-linked (GlcNAc...) asparagine) is linked at N289. Residues 292-316 form a helical membrane-spanning segment; the sequence is LLYIIHGPICAALLVNLFFLLNIVR. At 317–331 the chain is on the cytoplasmic side; that stretch reads VLITKLKVTHQAESS. The chain crosses the membrane as a helical span at residues 332-353; the sequence is LYMKAVRATLILVPLLGIQYVL. Topologically, residues 354–368 are extracellular; sequence LPYKPEGRVSSEIYD. A helical membrane pass occupies residues 369–389; sequence YIMHILMHYQGLLVATIFCFF. The Cytoplasmic segment spans residues 390-465; that stretch reads NGEVQGVLRR…SILKSENPFT (76 aa).

It belongs to the G-protein coupled receptor 2 family.

The protein localises to the cell membrane. In terms of biological role, may function as G protein-coupled receptor for calcitonin-gene-related peptides and adrenomedullin. Specificity may be modulated by accessory proteins. May activate cAMP-dependent pathway. This is Calcitonin gene-related peptide type 1 receptor (calcrl) from Oncorhynchus gorbuscha (Pink salmon).